A 480-amino-acid polypeptide reads, in one-letter code: Aspartyl/glutamyl-tRNA(Asn/Gln) amidotransferase subunit B (480 aa).

Belongs to the GatB/GatE family. GatB subfamily. Heterotrimer of A, B and C subunits.

It catalyses the reaction L-glutamyl-tRNA(Gln) + L-glutamine + ATP + H2O = L-glutaminyl-tRNA(Gln) + L-glutamate + ADP + phosphate + H(+). The enzyme catalyses L-aspartyl-tRNA(Asn) + L-glutamine + ATP + H2O = L-asparaginyl-tRNA(Asn) + L-glutamate + ADP + phosphate + 2 H(+). In terms of biological role, allows the formation of correctly charged Asn-tRNA(Asn) or Gln-tRNA(Gln) through the transamidation of misacylated Asp-tRNA(Asn) or Glu-tRNA(Gln) in organisms which lack either or both of asparaginyl-tRNA or glutaminyl-tRNA synthetases. The reaction takes place in the presence of glutamine and ATP through an activated phospho-Asp-tRNA(Asn) or phospho-Glu-tRNA(Gln). The polypeptide is Aspartyl/glutamyl-tRNA(Asn/Gln) amidotransferase subunit B (Streptococcus agalactiae serotype III (strain NEM316)).